A 371-amino-acid polypeptide reads, in one-letter code: Liposome tubulation protein MamY (371 aa).

Residues 1 to 18 are Cytoplasmic-facing; the sequence is MLMNFVNNVSKTINGGAR. Residues 19-39 traverse the membrane as a helical segment; the sequence is IVYVGSFSWAVLSLLFVTAFS. Residues 40-51 lie on the Lumenal side of the membrane; that stretch reads GWNNIFSMLPHE. The chain crosses the membrane as a helical span at residues 52 to 72; the sequence is IFILVLTISLPIALIVLIFML. The Cytoplasmic portion of the chain corresponds to 73 to 371; that stretch reads SQIVRTVESV…LIDGTPISDA (299 aa).

It belongs to the magnetosome MamY family. In terms of assembly, probably interacts with MamX and MamZ proteins.

It is found in the magnetosome membrane. May be involved in constriction of the cell inner membrane to form mature magnetosomes. Binds cardiolipin and liposomes. May function with MamX, MamZ amd Mms6 in biomineralization. The chain is Liposome tubulation protein MamY from Magnetospirillum gryphiswaldense (strain DSM 6361 / JCM 21280 / NBRC 15271 / MSR-1).